The chain runs to 89 residues: Large ribosomal subunit protein eL34 (89 aa).

The disordered stretch occupies residues 1–22 (MPAPRYKSGSSKKVYRKAPGNS).

It belongs to the eukaryotic ribosomal protein eL34 family.

The protein is Large ribosomal subunit protein eL34 of Methanococcus maripaludis (strain DSM 14266 / JCM 13030 / NBRC 101832 / S2 / LL).